Consider the following 709-residue polypeptide: MSKTFAEIAEAFLEPEAVRIAKEAVEEYGDHERKIIQIGIHFQVCCMFCDEYLSTNGSDRFVLIEGRKRGTAVSLQNELCKSYDLEPLPFLCDIFDREEKQFVEIGITRKADDSYFQSKFGKLGNSCKIFVFSYDGRLDKNCEGPMEEQKLRIFSFLATAADFLRKENMFNEIFLPDNEETIIEMKKGKTFLKLRDESVPLPFQTYEQMKDYCEKFKGNPRELASKVSQMQSNIKLPIKHYEQNKFRQIRLPKGPMAPYTHKFLMEEAWMFTKISDPERSRAGEILIDFFKKGNLSAIRPKDKPLQGKYPIHYKNLWNQIKAAIADRTMVINENDHSEFLGGIGRASKKIPEVSLTQDVITTEGLKQSENKLPEPRSFPKWFNAEWMWAIKDSDLTGWVPMAEYPPADNELEDYAEHLNKTMEGVLQGTNCAREMGKCILTVGALMTECRLFPGKIKVVPIYARSKERKSMQEGLPVPSEMDCLFGICVKSKSHLNKDDGMYTIITFEFSIREPNLEKHQKYTVFEAGHTTVRMKKGESVIGREVPLYLYCRTTALSKIKNDWLSKARRCFITTMDTVETICLRESAKAEENLVEKTLNEKQMWIGKKNGELIAQPLREALRVQLVQQFYFCIYNDSQLEGFCNEQKKILMALEGDKKNKSSFGFNPEGLLEKIEECLINNPMCLFMAQRLNELVIEASKRGAKFFKID.

Positions 41, 65, 93, 104, and 105 each coordinate Mn(2+). The Nuclear localization signal 1 (NLS1) signature appears at 109–124; that stretch reads RKADDSYFQSKFGKLG. A Nuclear localization signal 2 (NLS2) motif is present at residues 166-228; that stretch reads KENMFNEIFL…NPRELASKVS (63 aa).

It belongs to the influenza viruses PA family. Influenza RNA polymerase is composed of three subunits: PB1, PB2 and PA. Interacts (via C-terminus) with PB1 (via N-terminus). Mn(2+) serves as cofactor. Phosphorylated on serines and threonines by host kinases, including human casein kinase II.

The protein resides in the host cytoplasm. The protein localises to the host nucleus. Functionally, plays an essential role in viral RNA transcription and replication by forming the heterotrimeric polymerase complex together with PB1 and PB2 subunits. The complex transcribes viral mRNAs by using a unique mechanism called cap-snatching. It consists in the hijacking and cleavage of host capped pre-mRNAs. These short capped RNAs are then used as primers for viral mRNAs. The PB2 subunit is responsible for the binding of the 5' cap of cellular pre-mRNAs which are subsequently cleaved after 10-13 nucleotides by the PA subunit that carries the endonuclease activity. The protein is Polymerase acidic protein of Homo sapiens (Human).